The chain runs to 142 residues: Translation initiation factor 2 subunit beta (142 aa).

Belongs to the eIF-2-beta/eIF-5 family. Heterotrimer composed of an alpha, a beta and a gamma chain.

In terms of biological role, eIF-2 functions in the early steps of protein synthesis by forming a ternary complex with GTP and initiator tRNA. The chain is Translation initiation factor 2 subunit beta from Methanosphaera stadtmanae (strain ATCC 43021 / DSM 3091 / JCM 11832 / MCB-3).